A 215-amino-acid chain; its full sequence is Sodium channel regulatory subunit beta-3 (215 aa).

A signal peptide spans 1–24 (MPAFNRLLPLASLVLIYWVRVCFP). The region spanning 25–138 (VCVEVPSETE…EAHRPFVKTT (114 aa)) is the Ig-like C2-type domain. Residues 25-156 (VCVEVPSETE…EEAGEDFTSV (132 aa)) lie on the Extracellular side of the membrane. Intrachain disulfides connect C26–C48 and C45–C120. 4 N-linked (GlcNAc...) asparagine glycosylation sites follow: N95, N109, N113, and N121. A helical membrane pass occupies residues 157 to 178 (VSEIMMYILLVFLTLWLFIEMI). The Cytoplasmic portion of the chain corresponds to 179–215 (YCYRKVSKAEEAAQENASDYLAIPSENKENSVVPVEE).

This sequence belongs to the sodium channel auxiliary subunit SCN3B (TC 8.A.17) family. A voltage-gated sodium (Nav) channel consists of an ion-conducting pore-forming alpha subunit functional on its own that is regulated by one or more beta subunits. Forms homodimers and homotrimers. SCN3B is non-covalently associated with alpha subunits and induces the formation of alpha subunit oligomers, including trimers. Interacts with SCN5A/Nav1.5; regulatory subunit of SCN5A/Nav1.5. Interacts with SCN7A/Nav2.1; probable regulatory subunit of SCN7A/Nav2.1. Interacts with SCN10A; regulatory subunit of SCN10A/Nav1.8. Interacts with NFASC; probably involved in targeting the sodium channels to the nodes of Ranvier. Intramolecular disulfide bonds favor the voltage-gated sodium channel oligomeric complex assembly. In terms of processing, N-glycosylated.

It localises to the cell membrane. Regulatory subunit of multiple voltage-gated sodium (Nav) channels directly mediating the depolarization of excitable membranes. Navs, also called VGSCs (voltage-gated sodium channels) or VDSCs (voltage-dependent sodium channels), operate by switching between closed and open conformations depending on the voltage difference across the membrane. In the open conformation they allow Na(+) ions to selectively pass through the pore, along their electrochemical gradient. The influx of Na+ ions provokes membrane depolarization, initiating the propagation of electrical signals throughout cells and tissues. The accessory beta subunits participate in localization and functional modulation of the Nav channels. Modulates the activity of SCN2A/Nav1.2, causing a hyperpolarizing shift in the voltage-dependence of inactivation of the channel and increasing the fraction of channels operating in the fast gating mode. Modulates the activity of SCN5A/Nav1.5. Could also regulate the atypical sodium channel SCN7A/Nav2.1. Modulates the activity of SCN10A/Nav1.8, regulating its oligomerization and accelerating the recovery from inactivation. The chain is Sodium channel regulatory subunit beta-3 from Mus musculus (Mouse).